The following is a 134-amino-acid chain: Small ribosomal subunit protein bS16 (134 aa).

The tract at residues 105 to 134 is disordered; sequence EAERRQKRLTAKTRRRQAKKAAEAAGSAEG. Over residues 109–123 the composition is skewed to basic residues; it reads RQKRLTAKTRRRQAK.

This sequence belongs to the bacterial ribosomal protein bS16 family.

This Chlorobaculum parvum (strain DSM 263 / NCIMB 8327) (Chlorobium vibrioforme subsp. thiosulfatophilum) protein is Small ribosomal subunit protein bS16.